The primary structure comprises 846 residues: DNA mismatch repair protein MutS (846 aa).

594–601 (GPNMSGKS) is an ATP binding site.

This sequence belongs to the DNA mismatch repair MutS family.

Functionally, this protein is involved in the repair of mismatches in DNA. It is possible that it carries out the mismatch recognition step. This protein has a weak ATPase activity. This is DNA mismatch repair protein MutS from Macrococcus caseolyticus (strain JCSC5402) (Macrococcoides caseolyticum).